Consider the following 417-residue polypeptide: Multifunctional CCA protein (417 aa).

ATP contacts are provided by Gly-8 and Arg-11. Residues Gly-8 and Arg-11 each coordinate CTP. Mg(2+) is bound by residues Asp-21 and Asp-23. ATP is bound by residues Arg-91, Arg-137, and Arg-140. 3 residues coordinate CTP: Arg-91, Arg-137, and Arg-140. The HD domain occupies 225 to 326 (SGIHTLMTLQ…LNVLKKTDAF (102 aa)).

The protein belongs to the tRNA nucleotidyltransferase/poly(A) polymerase family. Bacterial CCA-adding enzyme type 1 subfamily. As to quaternary structure, monomer. Can also form homodimers and oligomers. It depends on Mg(2+) as a cofactor. The cofactor is Ni(2+).

The enzyme catalyses a tRNA precursor + 2 CTP + ATP = a tRNA with a 3' CCA end + 3 diphosphate. It catalyses the reaction a tRNA with a 3' CCA end + 2 CTP + ATP = a tRNA with a 3' CCACCA end + 3 diphosphate. Functionally, catalyzes the addition and repair of the essential 3'-terminal CCA sequence in tRNAs without using a nucleic acid template. Adds these three nucleotides in the order of C, C, and A to the tRNA nucleotide-73, using CTP and ATP as substrates and producing inorganic pyrophosphate. tRNA 3'-terminal CCA addition is required both for tRNA processing and repair. Also involved in tRNA surveillance by mediating tandem CCA addition to generate a CCACCA at the 3' terminus of unstable tRNAs. While stable tRNAs receive only 3'-terminal CCA, unstable tRNAs are marked with CCACCA and rapidly degraded. This is Multifunctional CCA protein from Neisseria meningitidis serogroup C / serotype 2a (strain ATCC 700532 / DSM 15464 / FAM18).